The primary structure comprises 115 residues: Nucleoid-associated protein Rpic_1036 (115 aa).

It belongs to the YbaB/EbfC family. Homodimer.

The protein localises to the cytoplasm. It is found in the nucleoid. In terms of biological role, binds to DNA and alters its conformation. May be involved in regulation of gene expression, nucleoid organization and DNA protection. The sequence is that of Nucleoid-associated protein Rpic_1036 from Ralstonia pickettii (strain 12J).